The chain runs to 1435 residues: Dicer-like protein 2 (1435 aa).

The Helicase ATP-binding domain occupies 54-234 (MLSESLRQNI…LEVLEINLNA (181 aa)). 67–74 (MDTGSGKT) provides a ligand contact to ATP. Residues 175–178 (DEAH) carry the DEAH box motif. The region spanning 400–564 (KLIDFLVLEH…ENKRALEHIQ (165 aa)) is the Helicase C-terminal domain. One can recognise a Dicer dsRNA-binding fold domain in the interval 591 to 684 (ARNHLSHFCG…MPAHHHIDDE (94 aa)). 2 RNase III domains span residues 956 to 1099 (ANEL…IDGG) and 1141 to 1323 (LSEI…IDSQ). Residues glutamate 1178, aspartate 1309, and glutamate 1312 each contribute to the Mg(2+) site.

The protein belongs to the helicase family. Dicer subfamily. Mg(2+) is required as a cofactor. Requires Mn(2+) as cofactor.

Functionally, dicer-like endonuclease involved in cleaving double-stranded RNA in the RNA interference (RNAi) pathway. Produces 21 to 25 bp dsRNAs (siRNAs) which target the selective destruction of homologous RNAs leading to sequence-specific suppression of gene expression, called post-transcriptional gene silencing (PTGS). Part of a broad host defense response against viral infection and transposons. This Coccidioides immitis (strain RS) (Valley fever fungus) protein is Dicer-like protein 2 (DCL2).